A 100-amino-acid polypeptide reads, in one-letter code: Small ribosomal subunit protein uS14 (100 aa).

The protein belongs to the universal ribosomal protein uS14 family. As to quaternary structure, part of the 30S ribosomal subunit. Contacts proteins S3 and S10.

In terms of biological role, binds 16S rRNA, required for the assembly of 30S particles and may also be responsible for determining the conformation of the 16S rRNA at the A site. The polypeptide is Small ribosomal subunit protein uS14 (Microcystis aeruginosa (strain NIES-843 / IAM M-2473)).